A 72-amino-acid polypeptide reads, in one-letter code: Translation initiation factor IF-1 (72 aa).

The S1-like domain maps to 1 to 72; sequence MAKEEQIELE…TKGRITFRMK (72 aa).

It belongs to the IF-1 family. Component of the 30S ribosomal translation pre-initiation complex which assembles on the 30S ribosome in the order IF-2 and IF-3, IF-1 and N-formylmethionyl-tRNA(fMet); mRNA recruitment can occur at any time during PIC assembly.

The protein resides in the cytoplasm. Its function is as follows. One of the essential components for the initiation of protein synthesis. Stabilizes the binding of IF-2 and IF-3 on the 30S subunit to which N-formylmethionyl-tRNA(fMet) subsequently binds. Helps modulate mRNA selection, yielding the 30S pre-initiation complex (PIC). Upon addition of the 50S ribosomal subunit IF-1, IF-2 and IF-3 are released leaving the mature 70S translation initiation complex. The chain is Translation initiation factor IF-1 from Alcanivorax borkumensis (strain ATCC 700651 / DSM 11573 / NCIMB 13689 / SK2).